The sequence spans 172 residues: Bone marrow stromal antigen 2 (172 aa).

The Cytoplasmic segment spans residues 1–30 (MAPSFYHYLPVPMDEMGGKQGWGSHRQWLG). A helical; Signal-anchor for type II membrane protein membrane pass occupies residues 31 to 51 (AAILVVLFGVTLVILTIYFAV). Residues 52-152 (TANSVACRDG…ETSSTVQVNS (101 aa)) are Extracellular-facing. An N-linked (GlcNAc...) asparagine glycan is attached at Asn70. The stretch at 74 to 147 (LLQRQLTRTQ…LRIQKETSST (74 aa)) forms a coiled coil. Residue Asn94 is glycosylated (N-linked (GlcNAc...) asparagine; atypical). Residue Asn97 is glycosylated (N-linked (GlcNAc...) asparagine). Residue Ser152 is the site of GPI-anchor amidated serine attachment. The propeptide at 153 to 172 (GSSMVVSSLLVLKVSLFLLF) is removed in mature form.

As to quaternary structure, parallel homodimer; disulfide-linked. May form homotetramers under reducing conditions. Isoform 1 and isoform 2 form homodimers and also heterodimers with each other. Dimerization is essential for its antiviral activity. Interacts (via cytoplasmic domain) with ARHGAP44. Interacts with MMP14 (via C-terminal cytoplasmic tail). Interacts with LILRA4/ILT7. Interacts with RNF115. In naive mice, specifically expressed on type I interferon-producing cells (at protein level).

It is found in the golgi apparatus. The protein localises to the trans-Golgi network. Its subcellular location is the cell membrane. The protein resides in the late endosome. It localises to the membrane raft. It is found in the cytoplasm. The protein localises to the apical cell membrane. Its function is as follows. IFN-induced antiviral host restriction factor which efficiently blocks the release of diverse mammalian enveloped viruses by directly tethering nascent virions to the membranes of infected cells. Acts as a direct physical tether, holding virions to the cell membrane and linking virions to each other. The tethered virions can be internalized by endocytosis and subsequently degraded or they can remain on the cell surface. In either case, their spread as cell-free virions is restricted. Its target viruses belong to diverse families, including retroviridae: human immunodeficiency virus type 1 (HIV-1), mouse mammary tumor virus (MMTV) and murine leukemia virus (MLV), filoviridae: ebola virus (EBOV), arenaviridae: lassa virus (LASV), and rhabdoviridae: vesicular stomatitis virus (VSV). Can inhibit cell surface proteolytic activity of MMP14 causing decreased activation of MMP15 which results in inhibition of cell growth and migration. Can stimulate signaling by LILRA4/ILT7 and consequently provide negative feedback to the production of IFN by plasmacytoid dendritic cells in response to viral infection. Plays a role in the organization of the subapical actin cytoskeleton in polarized epithelial cells. This chain is Bone marrow stromal antigen 2 (Bst2), found in Mus musculus (Mouse).